The following is a 289-amino-acid chain: NAD kinase (289 aa).

Catalysis depends on D63, which acts as the Proton acceptor. NAD(+) is bound by residues 63-64 (DG), R68, 138-139 (ND), R149, D168, 179-184 (TGYSLS), and Q238.

Belongs to the NAD kinase family. A divalent metal cation is required as a cofactor.

It localises to the cytoplasm. It carries out the reaction NAD(+) + ATP = ADP + NADP(+) + H(+). Its function is as follows. Involved in the regulation of the intracellular balance of NAD and NADP, and is a key enzyme in the biosynthesis of NADP. Catalyzes specifically the phosphorylation on 2'-hydroxyl of the adenosine moiety of NAD to yield NADP. This is NAD kinase from Gemmatimonas aurantiaca (strain DSM 14586 / JCM 11422 / NBRC 100505 / T-27).